The sequence spans 418 residues: Serine protease inhibitor A3N (418 aa).

An N-terminal signal peptide occupies residues 1–29; the sequence is MTRLVTLELLMAGIGSALLCFPDCILGED. S93 is subject to Phosphoserine. N-linked (GlcNAc...) asparagine glycans are attached at residues N104, N258, and N269. An RCL region spans residues 367–394; it reads GTEAAAATGVKFVPMSAKLDPLIIAFDR.

This sequence belongs to the serpin family. Post-translationally, N-glycosylated. Liver.

Its subcellular location is the secreted. The polypeptide is Serine protease inhibitor A3N (Serpina3n) (Rattus norvegicus (Rat)).